Consider the following 250-residue polypeptide: NADH-quinone oxidoreductase subunit C (250 aa).

The protein belongs to the complex I 30 kDa subunit family. In terms of assembly, NDH-1 is composed of 14 different subunits. Subunits NuoB, C, D, E, F, and G constitute the peripheral sector of the complex.

Its subcellular location is the cell inner membrane. The enzyme catalyses a quinone + NADH + 5 H(+)(in) = a quinol + NAD(+) + 4 H(+)(out). NDH-1 shuttles electrons from NADH, via FMN and iron-sulfur (Fe-S) centers, to quinones in the respiratory chain. The immediate electron acceptor for the enzyme in this species is believed to be ubiquinone. Couples the redox reaction to proton translocation (for every two electrons transferred, four hydrogen ions are translocated across the cytoplasmic membrane), and thus conserves the redox energy in a proton gradient. The sequence is that of NADH-quinone oxidoreductase subunit C from Xanthomonas campestris pv. campestris (strain 8004).